The chain runs to 357 residues: uncharacterized protein (357 aa).

Positions Ser120–Pro145 are disordered.

This is an uncharacterized protein from Caenorhabditis elegans.